The chain runs to 214 residues: Insulin-like growth factor 2 (214 aa).

Residues 48–79 (EVASAETLCGGELVDALQFVCEDRGFYFSRPT) are b. Intrachain disulfides connect C56–C97, C68–C110, and C96–C101. The segment at 80–90 (SRSNSRRSQNR) is c. Positions 91-111 (GIVEECCFRSCDLNLLEQYCA) are a. The interval 112–117 (KPAKSE) is d. Positions 118-214 (RDVSATSLQI…PPTDNYVSHN (97 aa)) are cleaved as a propeptide — e peptide.

It belongs to the insulin family.

It is found in the secreted. Its function is as follows. The insulin-like growth factors, isolated from plasma, are structurally and functionally related to insulin but have a much higher growth-promoting activity. Acts as a ligand for integrin which is required for IGF2 signaling. This chain is Insulin-like growth factor 2, found in Oncorhynchus mykiss (Rainbow trout).